A 249-amino-acid polypeptide reads, in one-letter code: tRNA pseudouridine synthase A (249 aa).

Catalysis depends on aspartate 53, which acts as the Nucleophile. Tyrosine 111 is a substrate binding site.

The protein belongs to the tRNA pseudouridine synthase TruA family. In terms of assembly, homodimer.

It catalyses the reaction uridine(38/39/40) in tRNA = pseudouridine(38/39/40) in tRNA. Formation of pseudouridine at positions 38, 39 and 40 in the anticodon stem and loop of transfer RNAs. In Streptococcus sanguinis (strain SK36), this protein is tRNA pseudouridine synthase A.